The sequence spans 188 residues: Putative manganese efflux pump MntP (188 aa).

The next 6 helical transmembrane spans lie at 1 to 21 (MLIQILLIGVSVSMDTFAVSI), 40 to 60 (LWFGGFQALFPLLGYFAASTF), 64 to 84 (VTAVDHWIIFGLLALIGGNMV), 105 to 127 (HMLPLAVACSIDAVAVGVSFAFM), 131 to 153 (IWLSVVIIGITTGLFSAAGLYIG), and 166 to 186 (IAGGVVLILIGLKVLFEHLGF).

It belongs to the MntP (TC 9.B.29) family.

Its subcellular location is the cell membrane. Its function is as follows. Probably functions as a manganese efflux pump. This Bifidobacterium adolescentis (strain ATCC 15703 / DSM 20083 / NCTC 11814 / E194a) protein is Putative manganese efflux pump MntP.